The following is a 92-amino-acid chain: Small ribosomal subunit protein bS20 (92 aa).

The interval 1–23 (MANTTSAKKATRKIARRTDVNKA) is disordered.

The protein belongs to the bacterial ribosomal protein bS20 family.

Functionally, binds directly to 16S ribosomal RNA. This chain is Small ribosomal subunit protein bS20, found in Rhizobium etli (strain CIAT 652).